We begin with the raw amino-acid sequence, 182 residues long: Large ribosomal subunit protein uL10 (182 aa).

This sequence belongs to the universal ribosomal protein uL10 family. As to quaternary structure, part of the ribosomal stalk of the 50S ribosomal subunit. The N-terminus interacts with L11 and the large rRNA to form the base of the stalk. The C-terminus forms an elongated spine to which L12 dimers bind in a sequential fashion forming a multimeric L10(L12)X complex.

Forms part of the ribosomal stalk, playing a central role in the interaction of the ribosome with GTP-bound translation factors. The sequence is that of Large ribosomal subunit protein uL10 from Koribacter versatilis (strain Ellin345).